A 451-amino-acid chain; its full sequence is Sex peptide receptor-related protein 2 (451 aa).

Residues 1–63 (MNYEVYCGNA…DNLEIVVYGQ (63 aa)) are Extracellular-facing. The N-linked (GlcNAc...) asparagine glycan is linked to Asn15. The helical transmembrane segment at 64-84 (IFPILVLFAVFANAAVALVLS) threads the bilayer. Over 85–97 (KKHMITPTNVVLK) the chain is Cytoplasmic. A helical membrane pass occupies residues 98 to 118 (YMAIAELLVGLVPLPWTLFFF). At 119–140 (SMGNIKETHRLELWWCYLQKYS) the chain is on the extracellular side. Cysteines 134 and 225 form a disulfide. The helical transmembrane segment at 141–161 (MDAFPPVFHMIAMWLTVLLAA) threads the bilayer. Over 162-183 (QRYVSISHPLHSRSACNVKNVR) the chain is Cytoplasmic. A helical membrane pass occupies residues 184-204 (LATMIITVTSFLCGLPKSFDY). Residues 205–251 (EYETVHGWIYSHGNWTYASSCVMMPTAILTNMGQTVYFNIYFWTRAL) lie on the Extracellular side of the membrane. A glycan (N-linked (GlcNAc...) asparagine) is linked at Asn218. Residues 252 to 272 (GFIILPSFLLVLLNGLLIKGI) form a helical membrane-spanning segment. The Cytoplasmic portion of the chain corresponds to 273 to 301 (RRAQRRKLRLLREKRSEEAARQRDSNSTS). The chain crosses the membrane as a helical span at residues 302-322 (LMLVAIVSIFLIVNLPQAIFM). The Extracellular portion of the chain corresponds to 323 to 334 (GLLCVCETFTIK). A helical membrane pass occupies residues 335–355 (IPILEGTFPAVFLIASNMIVI). Residues 356–451 (ATYPINFGIY…TQFTTMDRSD (96 aa)) lie on the Cytoplasmic side of the membrane.

It belongs to the G-protein coupled receptor 1 family. In terms of tissue distribution, expressed in head neurons including the ASE sensory neurons and the ASI and AWB chemosensory neurons, the midbody neurons SDQ, and motor neurons in the tail.

It localises to the cell membrane. Its function is as follows. G-protein coupled receptor for the neuropeptide like protein nlp-38. Plays a role in several types of aversive gustatory associative learning including gustatory plasticity and salt avoidance learning. Its role in salt avoidance learning may be through activation of the transcription factor crh-1/CREB and de novo transcription and translation, which in turn promotes the formation of long-term memory. This chain is Sex peptide receptor-related protein 2, found in Caenorhabditis elegans.